A 549-amino-acid polypeptide reads, in one-letter code: Chaperonin GroEL (549 aa).

ATP-binding positions include 29-32 (TAGP), lysine 50, 86-90 (DGTTT), glycine 418, and aspartate 499.

This sequence belongs to the chaperonin (HSP60) family. As to quaternary structure, forms a cylinder of 14 subunits composed of two heptameric rings stacked back-to-back. Interacts with the co-chaperonin GroES.

It is found in the cytoplasm. The enzyme catalyses ATP + H2O + a folded polypeptide = ADP + phosphate + an unfolded polypeptide.. Together with its co-chaperonin GroES, plays an essential role in assisting protein folding. The GroEL-GroES system forms a nano-cage that allows encapsulation of the non-native substrate proteins and provides a physical environment optimized to promote and accelerate protein folding. This Wolbachia pipientis wMel protein is Chaperonin GroEL.